A 381-amino-acid chain; its full sequence is Complement decay-accelerating factor (381 aa).

The signal sequence occupies residues 1–34; that stretch reads MTVARPSVPAALPLLGELPRLLLLVLLCLPAVWG. Sushi domains are found at residues 35-96, 96-160, 161-222, and 223-285; these read DCGL…FCNR, RSCE…FCKK, KSCP…ECRE, and IYCP…ECRG. 2 disulfides stabilise this stretch: C36–C81 and C65–C94. N95 is a glycosylation site (N-linked (GlcNAc...) asparagine). Cystine bridges form between C98–C145, C129–C158, C163–C204, C190–C220, C225–C267, and C253–C283. The interval 277 to 354 is disordered; sequence SGPPPECRGK…PNKGSGTTSG (78 aa). Polar residues predominate over residues 287-309; sequence SLTSKVPPTVQKPTTVNVPTTEV. Positions 310–328 are enriched in low complexity; sequence SPTSQKTTTKTTTPNAQAT. Residue S353 is the site of GPI-anchor amidated serine attachment. A propeptide spans 354–381 (removed in mature form); it reads GTTRLLSGHTCFTLTGLLGTLVTMGLLT.

This sequence belongs to the receptors of complement activation (RCA) family. In terms of assembly, monomer (major form) and non-disulfide-linked, covalent homodimer (minor form). Interacts with ADGRE5. (Microbial infection) Interacts with coxsackievirus A21, coxsackieviruses B1, B3 and B5 capsid proteins. As to quaternary structure, (Microbial infection) Interacts with human enterovirus 70 and D68 capsid proteins. In terms of assembly, (Microbial infection) Interacts with human echoviruses 6, 7, 11, 12, 20 and 21 capsid proteins. In terms of processing, the Ser/Thr-rich domain is heavily O-glycosylated. As to expression, expressed on the plasma membranes of all cell types that are in intimate contact with plasma complement proteins. It is also found on the surfaces of epithelial cells lining extracellular compartments, and variants of the molecule are present in body fluids and in extracellular matrix.

The protein resides in the cell membrane. Its subcellular location is the secreted. In terms of biological role, this protein recognizes C4b and C3b fragments that condense with cell-surface hydroxyl or amino groups when nascent C4b and C3b are locally generated during C4 and c3 activation. Interaction of daf with cell-associated C4b and C3b polypeptides interferes with their ability to catalyze the conversion of C2 and factor B to enzymatically active C2a and Bb and thereby prevents the formation of C4b2a and C3bBb, the amplification convertases of the complement cascade. Inhibits complement activation by destabilizing and preventing the formation of C3 and C5 convertases, which prevents complement damage. Its function is as follows. (Microbial infection) Acts as a receptor for Coxsackievirus A21, coxsackieviruses B1, B3 and B5. Functionally, (Microbial infection) Acts as a receptor for Human enterovirus 70 and D68. (Microbial infection) Acts as a receptor for Human echoviruses 6, 7, 11, 12, 20 and 21. In Homo sapiens (Human), this protein is Complement decay-accelerating factor (CD55).